We begin with the raw amino-acid sequence, 611 residues long: Guanylate-binding protein 6 (611 aa).

A GTPase domain (Globular) region spans residues M1–C308. The GB1/RHD3-type G domain maps to S33–K275. GTP contacts are provided by residues G43–S50, L65–S67, and D95–L99.

It belongs to the TRAFAC class dynamin-like GTPase superfamily. GB1/RHD3 GTPase family. GB1 subfamily.

The protein localises to the cytoplasmic vesicle. The catalysed reaction is GTP + H2O = GDP + phosphate + H(+). Interferon (IFN)-inducible GTPase that plays important roles in innate immunity against a diverse range of bacterial, viral and protozoan pathogens, such as bacterial pathogens Listeria monocytogenes and Mycobacterium bovis BCG as well as the protozoan pathogen Toxoplasma gondii. Confers protection to several pathogens, including the bacterial pathogens Listeria monocytogenes and Mycobacterium bovis BCG as well as the protozoan pathogen Toxoplasma gondii. The sequence is that of Guanylate-binding protein 6 (Gbp6) from Mus musculus (Mouse).